The primary structure comprises 353 residues: DNA integrity scanning protein DisA (353 aa).

Residues 6 to 144 enclose the DAC domain; it reads DKELMNILKI…GGIKYVLRDS (139 aa). ATP is bound by residues Gly73, Leu91, and 104–108; that span reads TRHRT.

The protein belongs to the DisA family. In terms of assembly, homooctamer. Mg(2+) is required as a cofactor.

The catalysed reaction is 2 ATP = 3',3'-c-di-AMP + 2 diphosphate. Participates in a DNA-damage check-point that is active prior to asymmetric division when DNA is damaged. DisA forms globular foci that rapidly scan along the chromosomes during sporulation, searching for lesions. When a lesion is present, DisA pauses at the lesion site. This triggers a cellular response that culminates in a temporary block in sporulation initiation. Its function is as follows. Also has diadenylate cyclase activity, catalyzing the condensation of 2 ATP molecules into cyclic di-AMP (c-di-AMP). c-di-AMP acts as a signaling molecule that couples DNA integrity with progression of sporulation. The rise in c-di-AMP level generated by DisA while scanning the chromosome, operates as a positive signal that advances sporulation; upon encountering a lesion, the DisA focus arrests at the damaged site and halts c-di-AMP synthesis. In Clostridium botulinum (strain Kyoto / Type A2), this protein is DNA integrity scanning protein DisA.